The chain runs to 260 residues: Uroplakin-1b (260 aa).

The Cytoplasmic portion of the chain corresponds to 1–15 (MAKDDSTVRCFQGLL). Residues 16–36 (IFGHVIVGMCGIALTAECIFF) traverse the membrane as a helical segment. Residues 37-59 (VSDQHSLYPLLEATNNDDIFGAA) lie on the Extracellular side of the membrane. The chain crosses the membrane as a helical span at residues 60–80 (WIGMFVGICLFCLSVLAIVGI). At 81-86 (MKSNRK) the chain is on the cytoplasmic side. The helical transmembrane segment at 87–107 (ILLAYFIMMFIVYGFEVASCI) threads the bilayer. Topologically, residues 108-229 (TAATQRDFFT…ELISGPMDRH (122 aa)) are extracellular. The chain crosses the membrane as a helical span at residues 230–250 (AWGVAWFGFAILCWTFWVLLG). Residues 251–260 (TMFYWSRIEY) lie on the Cytoplasmic side of the membrane.

This sequence belongs to the tetraspanin (TM4SF) family. As to quaternary structure, heterodimer with uroplakin-3A (UPK3A) or uroplakin-3B (UPK3B). N-glycosylated with high-mannose oligosaccharides. Bladder epithelium.

It is found in the membrane. In terms of biological role, component of the asymmetric unit membrane (AUM); a highly specialized biomembrane elaborated by terminally differentiated urothelial cells. May play an important role in normal bladder epithelial physiology, possibly in regulating membrane permeability of superficial umbrella cells or in stabilizing the apical membrane through AUM/cytoskeletal interactions. This Mus musculus (Mouse) protein is Uroplakin-1b (Upk1b).